The following is a 637-amino-acid chain: MSQQETHGFQTEVKQLLHLMIHSLYSNKEIFLRELVSNAADAADKLRYLALTNDALYEGDGELRVRISADKDKGTVTIEDNGVGMTRDGVIEHLGTIAKSGTAEFFKNLSGEASKDSQLIGQFGVGFYSAFIVAKKVTVRTRAAGHKADEAVLWESEGEGSFTVETITKASRGTEITLHLRDEEKEFADDWRLRSIITKYSDHISVPVEMWQEGTPERDGPDGEKIPATEGYWKVMNKATALWMRNKSEISDEEYQEFYKHISHDYTDALLWSHNRVEGKQEYTNLLYIPSKAPWDLWNRDRKHGLKLFVQRVFIMDDAEQFMPSYLRFVQGLIDSNDLPLNVSREILQDNHITKAMRTGITKRVLGMLEKLAKDDAEKYQQFWAEFGQVLKEGPAEDFANRERIAGLLRFASTHTGSAAPTVSLDDYISRMKEGQTKIYYIVADSYDAAANSPHLELLRKKDIEVLLMSERIDEWLINHLTEYKEKQLHSVTRGELELGELEDAAEKEAQEKLAEESAPLIERIKAALGTKVADVKVTSRLTDTPACVVTGEGEMSTQMIKLMQAAGQPVPEVKPTFEVNPAHPLVSRLNDLQDETAFADWSNLLLQQAQLSEKGSLADPSAFIKLMNQMLLANMK.

The interval 1–345 (MSQQETHGFQ…SNDLPLNVSR (345 aa)) is a; substrate-binding. Residues 346 to 562 (EILQDNHITK…EGEMSTQMIK (217 aa)) form a b region. The c stretch occupies residues 563 to 637 (LMQAAGQPVP…MNQMLLANMK (75 aa)).

The protein belongs to the heat shock protein 90 family. Homodimer.

It is found in the cytoplasm. Its function is as follows. Molecular chaperone. Has ATPase activity. The chain is Chaperone protein HtpG from Shewanella sp. (strain W3-18-1).